The primary structure comprises 448 residues: Chromosomal replication initiator protein DnaA (448 aa).

Positions 1 to 85 (MHDNLPQIWE…EVHIVVPSEE (85 aa)) are domain I, interacts with DnaA modulators. Positions 85-110 (ERVGDTQNINARRSNAQSPIMGNSPL) are domain II. Positions 111-327 (ILNPKYTFDT…GALIRIVAYS (217 aa)) are domain III, AAA+ region. ATP is bound by residues Gly155, Gly157, Lys158, and Thr159. The segment at 328–448 (SLTNSEVTVE…DAIIKELKSD (121 aa)) is domain IV, binds dsDNA.

Belongs to the DnaA family. In terms of assembly, oligomerizes as a right-handed, spiral filament on DNA at oriC.

It localises to the cytoplasm. In terms of biological role, plays an essential role in the initiation and regulation of chromosomal replication. ATP-DnaA binds to the origin of replication (oriC) to initiate formation of the DNA replication initiation complex once per cell cycle. Binds the DnaA box (a 9 base pair repeat at the origin) and separates the double-stranded (ds)DNA. Forms a right-handed helical filament on oriC DNA; dsDNA binds to the exterior of the filament while single-stranded (ss)DNA is stabiized in the filament's interior. The ATP-DnaA-oriC complex binds and stabilizes one strand of the AT-rich DNA unwinding element (DUE), permitting loading of DNA polymerase. After initiation quickly degrades to an ADP-DnaA complex that is not apt for DNA replication. Binds acidic phospholipids. This Alkaliphilus metalliredigens (strain QYMF) protein is Chromosomal replication initiator protein DnaA.